Reading from the N-terminus, the 241-residue chain is 3-deoxy-D-manno-octulosonic acid kinase (241 aa).

Residue D171 is part of the active site.

This sequence belongs to the protein kinase superfamily. KdkA/RfaP family.

The protein resides in the cell inner membrane. It carries out the reaction an alpha-Kdo-(2-&gt;6)-lipid IVA + ATP = a 4-O-phospho-alpha-Kdo-(2-&gt;6)-lipid IVA + ADP + H(+). It functions in the pathway bacterial outer membrane biogenesis; LPS core biosynthesis. Functionally, catalyzes the ATP-dependent phosphorylation of the 3-deoxy-D-manno-octulosonic acid (Kdo) residue in Kdo-lipid IV(A) at the 4-OH position. The protein is 3-deoxy-D-manno-octulosonic acid kinase of Haemophilus influenzae (strain 86-028NP).